The following is a 1286-amino-acid chain: Protein patched (1286 aa).

Topologically, residues 1-76 (MDRDSLPRVP…GSSVQKHAGK (76 aa)) are cytoplasmic. A helical transmembrane segment spans residues 77–92 (VLFVAILVLSTFCVGL). Topologically, residues 93–427 (KSAQIHSKVH…DDILAKFSHP (335 aa)) are extracellular. Residues asparagine 142, asparagine 298, asparagine 335, and asparagine 388 are each glycosylated (N-linked (GlcNAc...) asparagine). A helical transmembrane segment spans residues 428-448 (SALSIVIGVAVTVLYAFCTLL). The 156-residue stretch at 428-583 (SALSIVIGVA…LLVFPAMISL (156 aa)) folds into the SSD domain. Over 449-465 (RWRDPVRGQSSVGVAGV) the chain is Cytoplasmic. A helical transmembrane segment spans residues 466 to 486 (LLMCFSTAAGLGLSALLGIVF). Residues 487–492 (NAASTQ) lie on the Extracellular side of the membrane. The helical transmembrane segment at 493–511 (VVPFLALGLGVDHIFMLTA) threads the bilayer. Residues 512-532 (AYAESNRREQTKLILKKVGPS) are Cytoplasmic-facing. The chain crosses the membrane as a helical span at residues 533–553 (ILFSACSTAGSFFAAAFIPVP). The Extracellular portion of the chain corresponds to 554–562 (ALKVFCLQA). Residues 563–583 (AIVMCSNLAAALLVFPAMISL) form a helical membrane-spanning segment. At 584–677 (DLRRRTAGRA…QHYTPFLMRS (94 aa)) the chain is on the cytoplasmic side. A helical transmembrane segment spans residues 678-699 (WVKFLTVMGFLAALISSLYAST). At 700-931 (RLQDGLDIID…IRDLSVKYEG (232 aa)) the chain is on the extracellular side. Asparagine 807 carries an N-linked (GlcNAc...) asparagine glycan. The chain crosses the membrane as a helical span at residues 932–952 (FGLPNYPSGIPFIFWEQYMTL). Residues 953-955 (RSS) lie on the Cytoplasmic side of the membrane. The helical transmembrane segment at 956–976 (LAMILACVLLAALVLVSLLLL) threads the bilayer. Over 977 to 1007 (SVWAAVLVILSVLASLAQIFGAMTLLGIKLS) the chain is Extracellular. Residues 1008 to 1028 (AIPAVILILSVGMMLCFNVLI) form a helical membrane-spanning segment. Residues 1029–1056 (SLGFMTSVGNRQRRVQLSMQMSLGPLVH) are Cytoplasmic-facing. A helical transmembrane segment spans residues 1057-1077 (GMLTSGVAVFMLSTSPFEFVI). At 1078–1082 (RHFCW) the chain is on the extracellular side. The chain crosses the membrane as a helical span at residues 1083–1103 (LLLVVLCVGACNSLLVFPILL). The Cytoplasmic segment spans residues 1104–1286 (SMVGPEAELV…RAVRSYNFTS (183 aa)). A disordered region spans residues 1116 to 1237 (EHPDRISTPS…PPPFPTAYPP (122 aa)). 2 stretches are compositionally biased toward polar residues: residues 1141-1152 (VQGSRSSRGSCQ) and 1165-1191 (PSLT…NDWT). A compositionally biased stretch (low complexity) spans 1199 to 1216 (PASYAAPPPAYHKAAAQQ). Positions 1224–1235 (PTTPPPPFPTAY) are enriched in pro residues.

It belongs to the patched family. As to quaternary structure, interacts (via C-terminal cytoplasmic region) with CG5504/l(2)tid; the interaction is probably direct. Interacts with hh/hedgehog.

It localises to the membrane. In terms of biological role, segmentation polarity protein. Acts as a receptor for the hedgehog protein (hh). Associates with the smoothened protein (SMO) to transduce the hedgehog signal leading to the activation of wingless, decapentaplegic and patched itself. Participates in cell interactions that establish pattern within the segment and the imaginal disks during development. In the absence of HH, represses the constitutive signaling activity of smo through fused (FU). In Drosophila melanogaster (Fruit fly), this protein is Protein patched.